The chain runs to 379 residues: Bifunctional riboflavin kinase/FMN phosphatase (379 aa).

An N-acetylserine modification is found at Ser2. The active-site Nucleophile; for FMN phosphatase activity is Asp17. Mg(2+)-binding residues include Asp17 and Asp19. The active-site Proton donor; for FMN phosphatase activity is Asp19. ATP contacts are provided by Gly248, Lys254, Thr260, and Asn262. Thr260 serves as a coordination point for Mg(2+). The active-site Nucleophile; for riboflavin kinase activity is the Glu312. The ATP site is built by Leu315, His317, and Tyr324. Arg337 and Phe342 together coordinate FMN.

The protein in the N-terminal section; belongs to the HAD-like hydrolase superfamily. CbbY/CbbZ/Gph/YieH family. In the C-terminal section; belongs to the flavokinase family. In terms of assembly, monomer. Mg(2+) serves as cofactor.

It carries out the reaction riboflavin + ATP = FMN + ADP + H(+). The enzyme catalyses FMN + H2O = riboflavin + phosphate. The protein operates within cofactor biosynthesis; FMN biosynthesis; FMN from riboflavin (ATP route): step 1/1. Its function is as follows. Bifunctional enzyme that catalyzes the hydrolysis of flavin-mononucleotide (FMN) to riboflavin (vitamin B2) and the phosphorylation of riboflavin to form (FMN) coenzyme. This Arabidopsis thaliana (Mouse-ear cress) protein is Bifunctional riboflavin kinase/FMN phosphatase.